The following is a 783-amino-acid chain: DNA repair and recombination protein RAD54-like (783 aa).

The interval 2–9 is required for chromatin remodeling, strand pairing activities and coupling of ATPase activity; the sequence is RRSLAPSQ. Phosphothreonine is present on threonine 22. Positions 165–340 constitute a Helicase ATP-binding domain; it reads EGKRGNFNGC…FSLVNFVNPE (176 aa). Residue 178 to 185 coordinates ATP; that stretch reads DEMGLGKT. The DEGH box signature appears at 291–294; that stretch reads DEGH. Positions 497-654 constitute a Helicase C-terminal domain; it reads LLDFMLAAIR…NNESSEKHFT (158 aa). The tract at residues 737–783 is disordered; that stretch reads AESKPAAITEDDESEQQQQSPKRTSKNDDNDEDFDPENSAEEQFLGF. Residues 765–776 are compositionally biased toward acidic residues; it reads DNDEDFDPENSA.

The protein belongs to the SNF2/RAD54 helicase family. As to quaternary structure, interacts (via N-terminus) with spn-A/Rad51.

Its subcellular location is the nucleus. In terms of biological role, involved in mitotic DNA repair and meiotic recombination. Functions in the recombinational DNA repair pathway. Essential for interhomolog gene conversion (GC), but may have a less important role in intersister GC than spn-A/Rad51. In the presence of DNA, spn-A/Rad51 enhances the ATPase activity of okr/Rad54. The protein is DNA repair and recombination protein RAD54-like of Drosophila mojavensis (Fruit fly).